Here is a 314-residue protein sequence, read N- to C-terminus: Putative S-adenosyl-L-methionine-dependent methyltransferase MAB_3886c (314 aa).

S-adenosyl-L-methionine-binding positions include Asp133 and 162–163 (DL).

This sequence belongs to the UPF0677 family.

Its function is as follows. Exhibits S-adenosyl-L-methionine-dependent methyltransferase activity. In Mycobacteroides abscessus (strain ATCC 19977 / DSM 44196 / CCUG 20993 / CIP 104536 / JCM 13569 / NCTC 13031 / TMC 1543 / L948) (Mycobacterium abscessus), this protein is Putative S-adenosyl-L-methionine-dependent methyltransferase MAB_3886c.